Here is an 88-residue protein sequence, read N- to C-terminus: Large ribosomal subunit protein bL27 (88 aa).

A disordered region spans residues 1–21 (MAHKKGASSSRNGRDSAAQRL).

The protein belongs to the bacterial ribosomal protein bL27 family.

The chain is Large ribosomal subunit protein bL27 from Mycobacterium marinum (strain ATCC BAA-535 / M).